Consider the following 1040-residue polypeptide: Nucleotide-binding oligomerization domain-containing protein 2 (1040 aa).

2 consecutive CARD domains span residues C26–C122 and H126–T218. Residues W63–L77 carry the ATG16L1-binding motif motif. Residues T239, Y252, T253, G302, S303, G304, K305, S306, and T307 each coordinate ADP. The tract at residues D241–A274 is required for CARD9 binding. The NACHT domain maps to D293–S618. G299–S306 provides a ligand contact to ATP. C395 carries the S-palmitoyl cysteine lipid modification. H603 lines the ADP pocket. LRR repeat units follow at residues R791–P812, V816–A839, Q844–K865, N872–T884, S900–A920, S928–L949, M956–A976, S984–Q1005, and T1012–G1032. C1033 carries S-palmitoyl cysteine lipidation.

The protein belongs to the NOD1-NOD2 family. Homooligomer: homooligomerizes following muramyl dipeptide (MDP)-binding, promoting RIPK2 recruitment. Interacts (via CARD domain) with RIPK2 (via CARD domain). Following RIPK2 recruitment, RIPK2 homooligomerizes via its CARD domain and forms long filaments named RIPosomes. Interacts (via CARD domain) with ubiquitin; inhibiting interaction with RIPK2. Component of a signaling complex consisting of ARHGEF2, NOD2 and RIPK2. Interacts with ANKRD17 (via N-terminus). Interacts with HSPA1A; the interaction enhances NOD2 stability. Interacts (via both CARD domains) with HSP90; the interaction enhances NOD2 stability. Interacts (via CARD domain) with SOCS3; the interaction promotes NOD2 degradation. Interacts (via CARD domain) with ERBIN; the interaction inhibits activation of NOD2. Interacts with MAPKBP1; the interaction is enhanced in the presence of muramyl dipeptide (MDP) and inhibits NOD2 homooligomerization and activation. Interacts with INAVA; the interaction takes place upon Pattern recognition receptor (PRR) stimulation. Interacts (via NACHT domain) with CARD9. Interacts (via CARD domain) with CASP1; this interaction leads to IL1B processing. Also interacts with CASP4. Interacts with NLRP1; this interaction is enhanced in the presence of muramyl dipeptide (MDP) and leads to increased IL1B release. Interacts with NLRP12; this interaction promotes degradation of NOD2 through the ubiquitin-proteasome pathway. Interacts with ANKHD1, C10orf67, CHMP5, DOCK7, ENTR1, KRT15, LDOC1, PPP1R12C, PPP2R3B, TRIM41 and VIM. Interacts with MAVS; interaction takes place following single-stranded RNA (ssRNA)-binding. Interacts with ATG16L1. Interacts with IRGM; promoting IRGM 'Lys-63'-linked polyubiquitination, which is required for interactions with the core autophagy factors. Palmitoylated by ZDHHC5; palmitoylation is required for proper recruitment to the bacterial entry site and hence for proper signaling upon cognate peptidoglycan detection. Palmitoylation promotes localization to the cell membrane. Palmitoylation protects from SQSTM1/p62-dependent autophagic degradation. In terms of processing, polyubiquitinated by TRIM27, leading to proteasome-mediated degradation. Polyubiquitinated and degraded following muramyl dipeptide (MDP) stimulation, conferring MDP tolerance and preventing septic shock. Post-translationally, degraded via selective autophagy following interaction with IRGM. IRGM promotes NOD2-RIPK2 RIPosome recruitment to autophagosome membranes, promoting their SQSTM1/p62-dependent autophagic degradation. O-glycosylated by OGT, O-GlcNAcylation increases protein stability.

It is found in the cell membrane. The protein localises to the basolateral cell membrane. The protein resides in the cytoplasm. It localises to the mitochondrion. ADP-binding promotes an inactive closed conformation. Its function is as follows. Pattern recognition receptor (PRR) that detects bacterial peptidoglycan fragments and other danger signals and plays an important role in gastrointestinal immunity. Specifically activated by muramyl dipeptide (MDP), a fragment of bacterial peptidoglycan found in every bacterial peptidoglycan type. NOD2 specifically recognizes and binds 6-O-phospho-MDP, the phosphorylated form of MDP, which is generated by NAGK. 6-O-phospho-MDP-binding triggers oligomerization that facilitates the binding and subsequent activation of the proximal adapter receptor-interacting RIPK2. Following recruitment, RIPK2 undergoes 'Met-1'- (linear) and 'Lys-63'-linked polyubiquitination by E3 ubiquitin-protein ligases XIAP, BIRC2, BIRC3 and the LUBAC complex, becoming a scaffolding protein for downstream effectors, triggering activation of the NF-kappa-B and MAP kinases signaling. This in turn leads to the transcriptional activation of hundreds of genes involved in immune response. Its ability to detect bacterial MDP plays a central role in maintaining the equilibrium between intestinal microbiota and host immune responses to control inflammation. An imbalance in this relationship results in dysbiosis, whereby pathogenic bacteria prevail on commensals, causing damage in the intestinal epithelial barrier as well as allowing bacterial invasion and inflammation. Acts as a regulator of appetite by sensing MDP in a subset of brain neurons: microbiota-derived MDP reach the brain, where they bind and activate NOD2 in inhibitory hypothalamic neurons, decreasing neuronal activity, thereby regulating satiety and body temperature. NOD2-dependent MDP-sensing of bacterial cell walls in the intestinal epithelial compartment contributes to sustained postnatal growth upon undernutrition. Also plays a role in antiviral response by acting as a sensor of single-stranded RNA (ssRNA) from viruses: upon ssRNA-binding, interacts with MAVS, leading to activation of interferon regulatory factor-3/IRF3 and expression of type I interferon. Also acts as a regulator of autophagy in dendritic cells via its interaction with ATG16L1, possibly by recruiting ATG16L1 at the site of bacterial entry. NOD2 activation in the small intestine crypt also contributes to intestinal stem cells survival and function: acts by promoting mitophagy via its association with ATG16L1. In addition to its main role in innate immunity, also regulates the adaptive immune system by acting as regulator of helper T-cell and regulatory T-cells (Tregs). Besides recognizing pathogens, also involved in the endoplasmic reticulum stress response: acts by sensing and binding to the cytosolic metabolite sphingosine-1-phosphate generated in response to endoplasmic reticulum stress, initiating an inflammation process that leads to activation of the NF-kappa-B and MAP kinases signaling. May also be involved in NLRP1 activation following activation by MDP, leading to CASP1 activation and IL1B release in macrophages. This Pan troglodytes (Chimpanzee) protein is Nucleotide-binding oligomerization domain-containing protein 2 (NOD2).